We begin with the raw amino-acid sequence, 468 residues long: MESRWVLHLDMDAFFASVEQLTRPTLRGRPVLVGGLGGRGVVAGASYEARAYGARSAMPMHQARRLIGVTAVVLPPRGVVYGIASRRVFDTVRGLVPVVEQLSFDEAFAEPPQLAGAVAEDVETFCERLRRRVRDETGLIASVGAGSGKQIAKIASGLAKPDGIRVVRHAEEQALLSGLPVRRLWGIGPVAEEKLHRLGIETIGQLAALSDAEAANILGATIGPALHRLARGIDDRPVVERAEAKQISAESTFAVDLTTMEQLHEAIDSIAEHAHQRLLRDGRGARTITVKLKKSDMSTLTRSATMPYPTTDAGALFTVARRLLPDPLQIGPIRLLGVGFSGLSDIRQESLFADSDLTQETAAAHYVETPGAVVPAAHDATMWRVGDDVAHPELGHGWVQGAGHGVVTVRFETRGSGPGSARTFPVDTGDISNASPLDSLDWPDYIGQLSVEGSAGASAPTVDDVGDR.

One can recognise a UmuC domain in the interval 6–188 (VLHLDMDAFF…LPVRRLWGIG (183 aa)). 2 residues coordinate Mg(2+): aspartate 10 and aspartate 105. Glutamate 106 is an active-site residue.

The protein belongs to the DNA polymerase type-Y family. As to quaternary structure, monomer. It depends on Mg(2+) as a cofactor.

It localises to the cytoplasm. It catalyses the reaction DNA(n) + a 2'-deoxyribonucleoside 5'-triphosphate = DNA(n+1) + diphosphate. Its function is as follows. Poorly processive, error-prone DNA polymerase involved in untargeted mutagenesis. Copies undamaged DNA at stalled replication forks, which arise in vivo from mismatched or misaligned primer ends. These misaligned primers can be extended by PolIV. Exhibits no 3'-5' exonuclease (proofreading) activity. May be involved in translesional synthesis, in conjunction with the beta clamp from PolIII. The polypeptide is DNA polymerase IV 1 (dinB1) (Mycobacterium tuberculosis (strain CDC 1551 / Oshkosh)).